A 142-amino-acid chain; its full sequence is Transcription antitermination protein NusB (142 aa).

It belongs to the NusB family. In terms of assembly, monomer or homodimer; in equilibrium, with a preference for the monomer. Dimerization may be employed to package NusB in an inactive form until recruitment into antitermination complexes.

Its function is as follows. Involved in transcription antitermination. Required for transcription of ribosomal RNA (rRNA) genes. Binds specifically to the boxA antiterminator sequence of the ribosomal RNA (rrn) operons. In Thermotoga maritima (strain ATCC 43589 / DSM 3109 / JCM 10099 / NBRC 100826 / MSB8), this protein is Transcription antitermination protein NusB.